The following is a 139-amino-acid chain: uncharacterized protein (139 aa).

An HTH marR-type domain is found at 8-139; the sequence is ANLLDHALTK…FLAIIAKLAQ (132 aa). A DNA-binding region (H-T-H motif) is located at residues 53 to 76; the sequence is IKDILKEVTLSPSATTTALNHLEQ.

This is an uncharacterized protein from Bacillus subtilis (strain 168).